Reading from the N-terminus, the 265-residue chain is S-adenosylmethionine decarboxylase proenzyme (265 aa).

Ser-114 serves as the catalytic Schiff-base intermediate with substrate; via pyruvic acid. Residue Ser-114 is modified to Pyruvic acid (Ser); by autocatalysis. His-119 serves as the catalytic Proton acceptor; for processing activity. Cys-142 acts as the Proton donor; for catalytic activity in catalysis.

The protein belongs to the prokaryotic AdoMetDC family. Type 2 subfamily. In terms of assembly, heterooctamer of four alpha and four beta chains arranged as a tetramer of alpha/beta heterodimers. Pyruvate serves as cofactor. Is synthesized initially as an inactive proenzyme. Formation of the active enzyme involves a self-maturation process in which the active site pyruvoyl group is generated from an internal serine residue via an autocatalytic post-translational modification. Two non-identical subunits are generated from the proenzyme in this reaction, and the pyruvate is formed at the N-terminus of the alpha chain, which is derived from the carboxyl end of the proenzyme. The post-translation cleavage follows an unusual pathway, termed non-hydrolytic serinolysis, in which the side chain hydroxyl group of the serine supplies its oxygen atom to form the C-terminus of the beta chain, while the remainder of the serine residue undergoes an oxidative deamination to produce ammonia and the pyruvoyl group blocking the N-terminus of the alpha chain.

The catalysed reaction is S-adenosyl-L-methionine + H(+) = S-adenosyl 3-(methylsulfanyl)propylamine + CO2. Its pathway is amine and polyamine biosynthesis; S-adenosylmethioninamine biosynthesis; S-adenosylmethioninamine from S-adenosyl-L-methionine: step 1/1. In terms of biological role, catalyzes the decarboxylation of S-adenosylmethionine to S-adenosylmethioninamine (dcAdoMet), the propylamine donor required for the synthesis of the polyamines spermine and spermidine from the diamine putrescine. The polypeptide is S-adenosylmethionine decarboxylase proenzyme (Buchnera aphidicola subsp. Acyrthosiphon pisum (strain APS) (Acyrthosiphon pisum symbiotic bacterium)).